The sequence spans 154 residues: L-alanine exporter AlaE (154 aa).

The next 4 helical transmembrane spans lie at 21 to 41 (FAMV…LSGM), 51 to 71 (LVAI…RDFF), 90 to 110 (ILAY…VIGA), and 115 to 135 (IVAA…VYGY).

The protein belongs to the AlaE exporter family.

The protein localises to the cell inner membrane. Its function is as follows. Exports L-alanine. This chain is L-alanine exporter AlaE, found in Escherichia fergusonii (strain ATCC 35469 / DSM 13698 / CCUG 18766 / IAM 14443 / JCM 21226 / LMG 7866 / NBRC 102419 / NCTC 12128 / CDC 0568-73).